Reading from the N-terminus, the 338-residue chain is D-erythrose-4-phosphate dehydrogenase (338 aa).

Residue 12–13 (RI) participates in NAD(+) binding. Residues 154–156 (SCT), R200, 213–214 (TK), and R236 each bind substrate. The Nucleophile role is filled by C155. Residue N318 coordinates NAD(+).

Belongs to the glyceraldehyde-3-phosphate dehydrogenase family. Epd subfamily. As to quaternary structure, homotetramer.

Its subcellular location is the cytoplasm. The enzyme catalyses D-erythrose 4-phosphate + NAD(+) + H2O = 4-phospho-D-erythronate + NADH + 2 H(+). It participates in cofactor biosynthesis; pyridoxine 5'-phosphate biosynthesis; pyridoxine 5'-phosphate from D-erythrose 4-phosphate: step 1/5. Its function is as follows. Catalyzes the NAD-dependent conversion of D-erythrose 4-phosphate to 4-phosphoerythronate. This is D-erythrose-4-phosphate dehydrogenase from Pectobacterium carotovorum subsp. carotovorum (strain PC1).